A 271-amino-acid polypeptide reads, in one-letter code: Ribosomal RNA small subunit methyltransferase A (271 aa).

S-adenosyl-L-methionine contacts are provided by Asn19, Leu21, Gly46, Glu67, Asp92, and Asn113.

This sequence belongs to the class I-like SAM-binding methyltransferase superfamily. rRNA adenine N(6)-methyltransferase family. RsmA subfamily.

Its subcellular location is the cytoplasm. The enzyme catalyses adenosine(1518)/adenosine(1519) in 16S rRNA + 4 S-adenosyl-L-methionine = N(6)-dimethyladenosine(1518)/N(6)-dimethyladenosine(1519) in 16S rRNA + 4 S-adenosyl-L-homocysteine + 4 H(+). Its function is as follows. Specifically dimethylates two adjacent adenosines (A1518 and A1519) in the loop of a conserved hairpin near the 3'-end of 16S rRNA in the 30S particle. May play a critical role in biogenesis of 30S subunits. The chain is Ribosomal RNA small subunit methyltransferase A from Photobacterium profundum (strain SS9).